The chain runs to 313 residues: Porphobilinogen deaminase (313 aa).

Cys243 carries the post-translational modification S-(dipyrrolylmethanemethyl)cysteine.

Belongs to the HMBS family. Monomer. Dipyrromethane serves as cofactor.

The catalysed reaction is 4 porphobilinogen + H2O = hydroxymethylbilane + 4 NH4(+). Its pathway is porphyrin-containing compound metabolism; protoporphyrin-IX biosynthesis; coproporphyrinogen-III from 5-aminolevulinate: step 2/4. Its function is as follows. Tetrapolymerization of the monopyrrole PBG into the hydroxymethylbilane pre-uroporphyrinogen in several discrete steps. The polypeptide is Porphobilinogen deaminase (Bordetella petrii (strain ATCC BAA-461 / DSM 12804 / CCUG 43448)).